Reading from the N-terminus, the 363-residue chain is Zinc finger protein 830 (363 aa).

An N-acetylalanine modification is found at A2. Residues 16 to 40 (VNQEELRRLMREKQRLSTNRKRIES) are a coiled coil. A C2H2-type zinc finger spans residues 53-75 (CALCNTPVKSELLWQTHVLGKQH). A disordered region spans residues 81–213 (ELKGAKGATQ…NPPKAPLVPH (133 aa)). The span at 90–99 (QGPSTGTVPQ) shows a compositional bias: polar residues. Residues 104–115 (RATDVESQDAKK) show a composition bias toward basic and acidic residues. Residues 129–143 (SASSANLDAARAAPS) are compositionally biased toward low complexity. Positions 152-164 (DYDDEEEEEEEGG) are enriched in acidic residues. Positions 165–184 (GEERRDSSKHLPDAQGKEHS) are enriched in basic and acidic residues. Residues 189–205 (RETTSNVLPNDPFNTNP) show a composition bias toward polar residues. Phosphoserine is present on S216. A coiled-coil region spans residues 303–331 (IECYRRVEKLRNRQDEIKNKLKEVLTIKE). A phosphoserine mark is found at S342 and S353.

Component of the XAB2 complex, a multimeric protein complex composed of XAB2, PRPF19, AQR, ZNF830, ISY1, and PPIE; this complex binds preferentially to RNA. Interacts with XAB2. Identified in a pentameric intron-binding (IB) complex composed of AQR, XAB2, ISY1, ZNF830 and PPIE that is incorporated into the spliceosome as a preassembled complex. The IB complex does not contain PRPF19. Phosphorylated in response to DNA damage by the cell cycle checkpoint kinases ATR/ATM. In terms of tissue distribution, widely expressed at low level. Expressed in oocytes from primordial to antral follicles. Also detected in somatic cells of the ovary, namely, in granulosa cells from the pre-antral follicle stage onward.

The protein resides in the nucleus. It localises to the chromosome. It is found in the nucleus speckle. May play a role in pre-mRNA splicing as component of the spliceosome. Acts as an important regulator of the cell cycle that participates in the maintenance of genome integrity. During cell cycle progression in embryonic fibroblast, prevents replication fork collapse, double-strand break formation and cell cycle checkpoint activation. Controls mitotic cell cycle progression and cell survival in rapidly proliferating intestinal epithelium and embryonic stem cells. During the embryo preimplantation, controls different aspects of M phase. During early oocyte growth, plays a role in oocyte survival by preventing chromosomal breaks formation, activation of TP63 and reduction of transcription. This chain is Zinc finger protein 830, found in Mus musculus (Mouse).